The chain runs to 372 residues: MEWTRGRILGRGSTATVYAAAGHNSDEILAVKSSEVHRSEFLQREAKILSSLSSPYVIGYRGSETKRESNGVVMYNLLMEYAPYGTLTDAAAKDGGRVDETRVVKYTRDILKGLEYIHSKGIVHCDVKGSNVVISEKGEAKIADFGCAKRVDPVFESPVMGTPAFMAPEVARGEKQGKESDIWAVGCTMIEMVTGSPPWTKADSREDPVSVLYRVGYSSETPELPCLLAEEAKDFLEKCLKREANERWTATQLLNHPFLTTKPDIEPVLVPGLISNSPTSVTDQTFWRSVEEEEEEETEEIQKDSRDLDRLSLWGCYSERIGRLKCVGGLDGTRCDMEGGDWIMVRARCEGTMISGSQKELIISENVLVGEL.

The Protein kinase domain maps to 3-259 (WTRGRILGRG…ATQLLNHPFL (257 aa)). Residues 9–17 (LGRGSTATV) and lysine 32 each bind ATP. Residue aspartate 126 is the Proton acceptor of the active site. The residue at position 312 (serine 312) is a Phosphoserine.

The protein belongs to the protein kinase superfamily. Ser/Thr protein kinase family. In terms of assembly, binds to MKK3.

The protein localises to the nucleus. The enzyme catalyses L-seryl-[protein] + ATP = O-phospho-L-seryl-[protein] + ADP + H(+). The catalysed reaction is L-threonyl-[protein] + ATP = O-phospho-L-threonyl-[protein] + ADP + H(+). Functionally, component of the abscisic acid (ABA) signaling pathway that may act as ABA signal transducer in the context of abiotic stresses. Triggers MPK7 activation in a MKK3-dependent manner. Mediates the ABA-dependent activation of the MKK3-MPK7 module. The chain is Mitogen-activated protein kinase kinase kinase 17 from Arabidopsis thaliana (Mouse-ear cress).